Here is a 324-residue protein sequence, read N- to C-terminus: Beta-ketoacyl-[acyl-carrier-protein] synthase III (324 aa).

Active-site residues include Cys-114 and His-246. Positions 247–251 (QANLR) are ACP-binding. Asn-276 is a catalytic residue.

It belongs to the thiolase-like superfamily. FabH family. As to quaternary structure, homodimer.

The protein localises to the cytoplasm. It carries out the reaction malonyl-[ACP] + acetyl-CoA + H(+) = 3-oxobutanoyl-[ACP] + CO2 + CoA. It participates in lipid metabolism; fatty acid biosynthesis. Its function is as follows. Catalyzes the condensation reaction of fatty acid synthesis by the addition to an acyl acceptor of two carbons from malonyl-ACP. Catalyzes the first condensation reaction which initiates fatty acid synthesis and may therefore play a role in governing the total rate of fatty acid production. Possesses both acetoacetyl-ACP synthase and acetyl transacylase activities. Its substrate specificity determines the biosynthesis of branched-chain and/or straight-chain of fatty acids. This chain is Beta-ketoacyl-[acyl-carrier-protein] synthase III, found in Campylobacter jejuni (strain RM1221).